Reading from the N-terminus, the 565-residue chain is MDLAKQISVVDSSLQDVTRNITRPLANFHPNVWGDRFLLNNSDQVQLKMNALDKEEAIEKLKEGVRRKLKEASNDYMRLIQMVDAIQRLGFAYHFEEEIDQALQCLFERHHEYCKDNHDLYANSLSFRLLRQQGYRVSCEIFEKFKDVKGNFMLPNNGEVMGVLEFYEATHLRVHGEDLLDHDFVLSREYLESVLPSLTNPLAEQVDHALHQHSNRRGLSRLEARHYMPVYEQYASHDQYLLKLAKLDFNMLQSLHKEELSELSRWWKGIDVARNLPYARDRIVETYFWILGVYFEPEYAAARKILVKVQSLFSIIDDTFDAYGTFEELQIFTQALERWSISCLDQLPDYMKLIYKTVLEVYDEIEEEMIKQGTSYRTAYGIEAIKSLTRNYFMEAEWREKKYTPTTDEHMRLALKTCGYTSLIIISFLGMGEVVKREAFDWVLSEPDFVKASLTINRLVDDIVGHEDEQKRNHVVSSVECYVQESKTSREDAVYELNSRVESTWKDLNEGFLKPTKFPSPLLYRVLNYSRVIEVMYTKGDWYTNVGPEMQDYIRQLLIDPVNVE.

Mg(2+) contacts are provided by Asp-317, Asp-321, Asp-461, and Glu-469. The DDXXD motif signature appears at Asp-317–Asp-321.

Belongs to the terpene synthase family. Requires Mg(2+) as cofactor.

It carries out the reaction (2E,6E)-farnesyl diphosphate = bicyclogermacrene + diphosphate. It functions in the pathway secondary metabolite biosynthesis; terpenoid biosynthesis. Functionally, sesquiterpene synthase converting farnesyl diphosphate to bicyclogermacrene as the major product. This Phyla dulcis (Aztec sweet herb) protein is Bicyclogermacrene synthase.